A 313-amino-acid chain; its full sequence is MASGNLPWELEEEILCRLPLGSLVRLRSVCKHWNDFFNDKWFIKKSLGCARPQFIILPESKIYSIGTIGLDGVDPKIEVRELACQFHFEAEKWAFTAACDGLLFRDFWNQGVTIWNPWLRQVGWIEYKENRDFRFCGVGYDAGKPEKGYKIFGYFNRFYDTKLKIDHRFAIFECASQAVKFIDSPEWPMLAGRGEYVSLNGNLYWTAYNEETREHFLGSFNFSTEISMRFCLLPCAKHVSGLRDKLVLTVFKGDRFALLKQSRISKDTKVLTAQYGPKARTKKNENAEKACLKSYGSLKPDRLEKLKKSMKRY.

Residues 1–46 (MASGNLPWELEEEILCRLPLGSLVRLRSVCKHWNDFFNDKWFIKKS) enclose the F-box domain.

This is Probable F-box protein At3g44130 from Arabidopsis thaliana (Mouse-ear cress).